Consider the following 108-residue polypeptide: uncharacterized protein (108 aa).

Transmembrane regions (helical) follow at residues 10–32 (SLCYFSVFIAPIIVPIVAYFVVN), 45–67 (ISHIVPFVGWLFLFIALLGGAVA), and 77–99 (FVIIGGAVIYFLVVIGIIIWNVI).

The protein resides in the cell membrane. This is an uncharacterized protein from Bacillus subtilis (strain 168).